Consider the following 115-residue polypeptide: MNMALTLFTNTALASLLVLIAFWLPQLNTYSEKVSPYECGFDPMGSARLPFSMKFFLVAITFLLFDLEIALLLPLPWASHTDNLTTMLTMALLLISLLAASLAYEWTEKGLEWTE.

The next 3 helical transmembrane spans lie at 4 to 24 (ALTL…AFWL), 55 to 75 (FFLV…LLPL), and 84 to 104 (LTTM…SLAY).

The protein belongs to the complex I subunit 3 family. As to quaternary structure, core subunit of respiratory chain NADH dehydrogenase (Complex I) which is composed of 45 different subunits. Interacts with TMEM186. Interacts with TMEM242.

It is found in the mitochondrion inner membrane. It catalyses the reaction a ubiquinone + NADH + 5 H(+)(in) = a ubiquinol + NAD(+) + 4 H(+)(out). Core subunit of the mitochondrial membrane respiratory chain NADH dehydrogenase (Complex I) which catalyzes electron transfer from NADH through the respiratory chain, using ubiquinone as an electron acceptor. Essential for the catalytic activity of complex I. The polypeptide is NADH-ubiquinone oxidoreductase chain 3 (Halichoerus grypus (Gray seal)).